A 494-amino-acid polypeptide reads, in one-letter code: Glycerol kinase (494 aa).

An ADP-binding site is contributed by T12. ATP-binding residues include T12, T13, and S14. T12 contributes to the sn-glycerol 3-phosphate binding site. R16 is an ADP binding site. Sn-glycerol 3-phosphate-binding residues include R82, E83, Y134, and D241. Residues R82, E83, Y134, D241, and Q242 each coordinate glycerol. Residues T263 and G306 each contribute to the ADP site. ATP-binding residues include T263, G306, Q310, and G407. Residue G407 coordinates ADP.

Belongs to the FGGY kinase family.

It catalyses the reaction glycerol + ATP = sn-glycerol 3-phosphate + ADP + H(+). It functions in the pathway polyol metabolism; glycerol degradation via glycerol kinase pathway; sn-glycerol 3-phosphate from glycerol: step 1/1. With respect to regulation, inhibited by fructose 1,6-bisphosphate (FBP). In terms of biological role, key enzyme in the regulation of glycerol uptake and metabolism. Catalyzes the phosphorylation of glycerol to yield sn-glycerol 3-phosphate. The polypeptide is Glycerol kinase (Brachyspira hyodysenteriae (strain ATCC 49526 / WA1)).